The following is a 1491-amino-acid chain: MSKVIQKKNHWTSRVHECTVKRGPQGELGVTVLGGAEHGEFPYVGAVAAVEAAGLPGGGEGPRLGEGELLLEVQGVRVSGLPRYDVLGVIDSCKEAVTFKAVRQGGRLNKDLRHFLNQRFQKGSPDHELQQTIRDNLYRHAVPCTTRSPREGEVPGVDYNFLTVKEFLDLEQSGTLLEVGTYEGNYYGTPKPPSQPVSGKVITTDALHSLQSGSKQSTPKRTKSYNDMQNAGIVHAENEEEDDVPEMNSSFTADSGEQEEHTLQETALPPVNSSIIAAPITDPSQKFPQYLPLSAEDNLGPLPENWEMAYTENGEVYFIDHNTKTTSWLDPRCLNKQQKPLEECEDDEGVHTEELDSELELPAGWEKIEDPVYGIYYVDHINRKTQYENPVLEAKRKKQLEQQQQQQQQQQQQQQQQQQQQTEEWTEDHSALVPPVIPNHPPSNPEPAREVPLQGKPFFTRNPSELKGKFIHTKLRKSSRGFGFTVVGGDEPDEFLQIKSLVLDGPAALDGKMETGDVIVSVNDTCVLGHTHAQVVKIFQSIPIGASVDLELCRGYPLPFDPDDPNTSLVTSVAILDKEPIIVNGQETYDSPASHSSKTGKVNGMKDARPSSPADVASNSSHGYPNDTVSLASSIATQPELITVHIVKGPMGFGFTIADSPGGGGQRVKQIVDSPRCRGLKEGDLIVEVNKKNVQALTHNQVVDMLVECPKGSEVTLLVQRGGLPVPKKSPKSQPLERKDSQNSSQHSVSSHRSLHTASPSHSTQVLPEFPPAEAQAPDQTDSSGQKKPDPFKIWAQSRSMYENRPMSPSPASGLSKGEREREINSTNFGECPIPDYQEQDIFLWRKETGFGFRILGGNEPGEPIYIGHIVPLGAADTDGRLRSGDELICVDGTPVIGKSHQLVVQLMQQAAKQGHVNLTVRRKVVFAVPKTENEVPSPASSHHSSNQPASLTEEKRTPQGSQNSLNTVSSGSGSTSGIGSGGGGGSGVVSTVVQPYDVEIRRGENEGFGFVIVSSVSRPEAGTTFAGNACVAMPHKIGRIIEGSPADRCGKLKVGDRILAVNGCSITNKSHSDIVNLIKEAGNTVTLRIIPGDESSNATLLTNAEKIATITTTHTPSQQGTQETRNTTKPKQESQFEFKAPQATQEQDFYTVELERGAKGFGFSLRGGREYNMDLYVLRLAEDGPAERCGKMRIGDEILEINGETTKNMKHSRAIELIKNGGRRVRLFLKRGDGSVPEYDPSSDRHGPATGPQGVPEVRAGPDRRQHPSLESSYPPDLHKSSPHGEKRAHARDPKGSREYSRQPNEHHTWNGTSRKPDSGACRPKDRAPEGRRDAQAERAAAANGPKRRSPEKRREGTRSADNTLERREKHEKRRDVSPERRRERSPTRRRDGSPSRRRRSLERLLEQRRSPERRRGGSPERRAKSTDRRRARSPERRRERSLDKRNREDRASHREREEANLKQDAGRSSRHPPEQRRRPYKECSTDLSI.

Residues 17–105 (ECTVKRGPQG…AVTFKAVRQG (89 aa)) form the PDZ 1 domain. Residues 96 to 287 (AVTFKAVRQG…APITDPSQKF (192 aa)) form the Guanylate kinase-like domain. Residue 103–110 (RQGGRLNK) participates in ATP binding. Positions 236–267 (AENEEEDDVPEMNSSFTADSGEQEEHTLQETA) are disordered. The WW 1 domain maps to 300-333 (GPLPENWEMAYTENGEVYFIDHNTKTTSWLDPRC). Ser357 is subject to Phosphoserine. Residues 359–392 (LELPAGWEKIEDPVYGIYYVDHINRKTQYENPVL) form the WW 2 domain. Over residues 411–421 (QQQQQQQQQQQ) the composition is skewed to low complexity. Positions 411 to 462 (QQQQQQQQQQQTEEWTEDHSALVPPVIPNHPPSNPEPAREVPLQGKPFFTRN) are disordered. The segment covering 435–445 (PVIPNHPPSNP) has biased composition (pro residues). One can recognise a PDZ 2 domain in the interval 472-554 (HTKLRKSSRG…GASVDLELCR (83 aa)). A compositionally biased stretch (polar residues) spans 586-600 (QETYDSPASHSSKTG). 3 disordered regions span residues 586–623 (QETY…SSHG), 720–832 (QRGG…FGEC), and 932–987 (TENE…GGGS). The PDZ 3 domain occupies 643-721 (TVHIVKGPMG…GSEVTLLVQR (79 aa)). Residues Ser730 and Ser741 each carry the phosphoserine modification. Positions 742 to 752 (QNSSQHSVSSH) are enriched in low complexity. The span at 756 to 766 (HTASPSHSTQV) shows a compositional bias: polar residues. Ser800 is modified (phosphoserine). The PDZ 4 domain occupies 813–895 (SGLSKGERER…DELICVDGTP (83 aa)). Over residues 939–951 (PASSHHSSNQPAS) the composition is skewed to polar residues. One can recognise a PDZ 5 domain in the interval 970–1066 (SSGSGSTSGI…DRILAVNGCS (97 aa)). Residues 970–1066 (SSGSGSTSGI…DRILAVNGCS (97 aa)) form an interaction with FCHSD2 region. The span at 975-987 (STSGIGSGGGGGS) shows a compositional bias: gly residues. Position 1071 is a phosphoserine (Ser1071). The span at 1112 to 1130 (TTTHTPSQQGTQETRNTTK) shows a compositional bias: polar residues. 2 disordered regions span residues 1112-1143 (TTTH…KAPQ) and 1234-1491 (DGSV…DLSI). The PDZ 6 domain maps to 1124-1206 (ETRNTTKPKQ…DEILEINGET (83 aa)). Composition is skewed to basic and acidic residues over residues 1278-1338 (DLHK…DAQA), 1354-1396 (KRRE…DGSP), and 1403-1491 (LERL…DLSI). A phosphoserine mark is found at Ser1361 and Ser1412.

In terms of assembly, part of a complex composed of AMOTL2, MAGI1 and CDH5, within the complex AMOTL2 acts as a scaffold protein for the interaction of MAGI1 with CDH5. The complex is required for coupling actin fibers to cell junctions in endothelial cells. Interacts through its WW 2 domain with SYNPO and through its PDZ 5 domain with ACTN4. Interacts with cytoplasmic domain of ADGRB1. Interacts via its WW domains with DRPLA. Interacts with ESAM, LRP2 and CXADR. May interact with CTNNB1. Interacts through its PDZ 1 domain with NET1. Interacts with ASIC3 and AMOT. Interacts with FCHSD2. Interacts with IGSF5/JAM4 and through its PDZ 2 and 3 domains with NPHS1 forming a tripartite complex. Interacts with DDN. Interacts with DLL1. Interacts with KCNJ10 and possibly with KCNJ10/KCNJ16 heterodimer; this interaction may facilitate KCNJ10/KCNJ16 potassium channel expression at the basolateral membrane in kidney tubular cells. Interacts with PRRG4 (via cytoplasmic domain). As to quaternary structure, interacts (via PDZ domain) with RAPGEF2. Widely expressed with the exception of skeletal muscle. Isoform 1, isoform 2 and isoform 6 are highly expressed in colon, kidney, lung, liver, and pancreas. Isoform 5 is predominantly expressed in brain and heart. Isoform 3 and isoform 4 are highly expressed in pancreas and brain.

Its subcellular location is the cell junction. It localises to the tight junction. The protein localises to the cell membrane. In terms of biological role, plays a role in coupling actin fibers to cell junctions in endothelial cells, via its interaction with AMOTL2 and CDH5. May regulate acid-induced ASIC3 currents by modulating its expression at the cell surface. The sequence is that of Membrane-associated guanylate kinase, WW and PDZ domain-containing protein 1 (MAGI1) from Homo sapiens (Human).